We begin with the raw amino-acid sequence, 252 residues long: 5'-nucleotidase SurE (252 aa).

4 residues coordinate a divalent metal cation: Asp-8, Asp-9, Ser-39, and Asn-91.

The protein belongs to the SurE nucleotidase family. A divalent metal cation serves as cofactor.

Its subcellular location is the cytoplasm. The enzyme catalyses a ribonucleoside 5'-phosphate + H2O = a ribonucleoside + phosphate. Nucleotidase that shows phosphatase activity on nucleoside 5'-monophosphates. The polypeptide is 5'-nucleotidase SurE (Bordetella petrii (strain ATCC BAA-461 / DSM 12804 / CCUG 43448)).